The sequence spans 1073 residues: Ubiquitin carboxyl-terminal hydrolase 53 (1073 aa).

The region spanning 30 to 351 is the USP domain; it reads KGLLNEPGQN…QPLLLFYANP (322 aa). Residue C41 is the Nucleophile of the active site. Zn(2+) contacts are provided by H66, C68, C73, C76, H132, C144, C149, H152, C165, C168, C224, and C228. Residue H301 is the Proton acceptor of the active site. Disordered regions lie at residues 391 to 437 and 485 to 636; these read LKEN…HIDQ and LSHF…PKQK. Polar residues predominate over residues 407 to 418; the sequence is KFPTDNISSSNR. Positions 524–541 are enriched in low complexity; the sequence is QSRASAQIISSSKSQILA. Residues 553-563 are compositionally biased toward polar residues; it reads DNGTGYDTDSS. A compositionally biased stretch (low complexity) spans 612-627; that stretch reads NISNKPKSSKDPSFSN.

This sequence belongs to the peptidase C19 family. As to quaternary structure, interacts (via the C-terminal region) with the heterodimer TJP1:TJP2. As to expression, expressed predominantly in skeletal muscle and heart.

Its subcellular location is the cell junction. It localises to the tight junction. It catalyses the reaction Thiol-dependent hydrolysis of ester, thioester, amide, peptide and isopeptide bonds formed by the C-terminal Gly of ubiquitin (a 76-residue protein attached to proteins as an intracellular targeting signal).. Deubiquitinase that mediates 'Lys-63'-linked deubiquitination of tight junction proteins, such as MARVELD2 and LSR, and which is involved in the survival of auditory hair cells and hearing. Specifically cleaves 'Lys-63'-linked polyubiquitin chains composed of at least 3 ubiquitin molecules, while it is not able to deubiquitinate substrates with shorter ubiquitin chains: recognizes ubiquitin chain in position S2 and catalyzes en bloc cleavage of polyubiquitin chains from substrate proteins. Probably acts by modulating the barrier properties and mechanical stability of tight junctions via deubiquitination of MARVELD2 and LSR. The protein is Ubiquitin carboxyl-terminal hydrolase 53 of Homo sapiens (Human).